Consider the following 160-residue polypeptide: MIFETLDEFAGAVPPMRGLIGLDLGTKTIGVALSDRLLTSASALETVKRKKFGVDADALAGLIAKHEVGGIILGLPRNMDGSEGPRAQATRAFALNLSRRGDFAHLALGFWDERLSTVAAERALIAADTSRKRRSEVIDAVAASYILQGALDRLRHLRAV.

The protein belongs to the YqgF nuclease family.

It localises to the cytoplasm. Could be a nuclease involved in processing of the 5'-end of pre-16S rRNA. This is Putative pre-16S rRNA nuclease from Jannaschia sp. (strain CCS1).